A 446-amino-acid chain; its full sequence is Putative F-box protein At1g32660 (446 aa).

Composition is skewed to basic and acidic residues over residues 1–12 (MKRKDDDQEDRS) and 43–57 (NKLE…NPSK). The interval 1–57 (MKRKDDDQEDRSCSSASKLDPIPLDLKMATVPTKSHMKKSHQNKLEEDEKEDTNPSK) is disordered. One can recognise an F-box domain in the interval 57-107 (KLELDSLPLDLKMAILTRIPAKSLMKLRCVSKMWSSIIRSRGFIDSYYAIS).

The protein is Putative F-box protein At1g32660 of Arabidopsis thaliana (Mouse-ear cress).